Here is a 185-residue protein sequence, read N- to C-terminus: MESPMHLPEVIAVEQESQQMGLSVTAPELHGSLSGLLAGGGCNGPDWLAMILADAGVAAPPKGSVLERLYQATASQLEDPDFAFQLLLADDGATLAARAHALFEWCRAFLGGFGLAAHCRSVLSAEGDEILRDLAKLAQASVDDFDMNEEKEDGSLEEIEEFVRVAVLLLHGDCLIGPCAPQRLN.

Belongs to the UPF0149 family.

This Xylella fastidiosa (strain Temecula1 / ATCC 700964) protein is UPF0149 protein PD_0802.